A 410-amino-acid chain; its full sequence is UBX domain-containing protein 3 (410 aa).

Disordered regions lie at residues 46–139 and 154–212; these read EEDH…PDPK and TISP…EKPL. Residues 65–85 are compositionally biased toward low complexity; that stretch reads GSSSGISGGDQQPPRPLQRQQ. Residues 86-97 are compositionally biased toward polar residues; that stretch reads NTQGQGMKSGTA. Ser156, Ser167, and Ser186 each carry phosphoserine. Residues 163–174 show a composition bias toward low complexity; it reads SGPSSLASSWAS. A compositionally biased stretch (polar residues) spans 183–196; the sequence is NEASGSTTPVTQSG. Thr190 carries the post-translational modification Phosphothreonine. Residues 211–276 form the SEP domain; that stretch reads PLRRTLYFWR…VQHRMDEDYV (66 aa). A UBX domain is found at 334–410; it reads ENKPTTRIQV…KNASLVQKSL (77 aa).

In terms of assembly, interacts with cdc48.

Functionally, involved in CDC48-dependent protein degradation through the ubiquitin/proteasome pathway. Involved in delivery of substrates to the 26S proteasome. Also required for membrane fusion and sporulation. The sequence is that of UBX domain-containing protein 3 (ubx3) from Schizosaccharomyces pombe (strain 972 / ATCC 24843) (Fission yeast).